A 1023-amino-acid polypeptide reads, in one-letter code: Protein FAM13A (1023 aa).

The Rho-GAP domain occupies 43–231 (VSLQELERQG…KILENYNTLF (189 aa)). The segment at 269 to 290 (LERDMPKPPPKTKIPKSRSEGS) is disordered. Ser345 is modified (phosphoserine). Disordered stretches follow at residues 381–437 (VNNS…SGFN) and 459–562 (CAGE…EVPQ). Positions 384-405 (SGGQSSEDSESGTLSASSATSA) are enriched in low complexity. Composition is skewed to basic and acidic residues over residues 412-427 (SKEQ…KGLI) and 509-524 (SDER…HTQH). The span at 536–549 (PSLSDTKQQRNQDA) shows a compositional bias: polar residues. 2 positions are modified to phosphoserine: Ser597 and Ser617. 2 disordered regions span residues 628–663 (QYLD…QEDL) and 726–759 (ISEE…KKQE). Residues 666–730 (AQLTRRIQSL…ESKLKISEED (65 aa)) are a coiled coil. Phosphoserine is present on Ser727. Thr732 is subject to Phosphothreonine. Residues 738–748 (RSNTLPKSFGS) are compositionally biased toward polar residues. Positions 750–759 (LEKEDEKKQE) are enriched in basic and acidic residues. A coiled-coil region spans residues 946 to 978 (ASIPELLEHLQEMREEKKRIRKKLRDFEDNFFR).

Belongs to the FAM13 family. Isoform 1 is widely expressed, with highest expression in skeletal muscle, thymus, brain and lung. Isoform 3 is less abundant than isoform 1 and predominantly expressed in kidney, pancreas, liver, lung and thymus.

This chain is Protein FAM13A (FAM13A), found in Homo sapiens (Human).